The primary structure comprises 718 residues: Ribosomal RNA large subunit methyltransferase K/L (718 aa).

One can recognise a THUMP domain in the interval 43-154 (TQYRILLWSR…QDELVVSLDL (112 aa)).

Belongs to the methyltransferase superfamily. RlmKL family.

The protein resides in the cytoplasm. The catalysed reaction is guanosine(2445) in 23S rRNA + S-adenosyl-L-methionine = N(2)-methylguanosine(2445) in 23S rRNA + S-adenosyl-L-homocysteine + H(+). It catalyses the reaction guanosine(2069) in 23S rRNA + S-adenosyl-L-methionine = N(2)-methylguanosine(2069) in 23S rRNA + S-adenosyl-L-homocysteine + H(+). Functionally, specifically methylates the guanine in position 2445 (m2G2445) and the guanine in position 2069 (m7G2069) of 23S rRNA. This Histophilus somni (strain 129Pt) (Haemophilus somnus) protein is Ribosomal RNA large subunit methyltransferase K/L.